Reading from the N-terminus, the 254-residue chain is Thiazole synthase (254 aa).

The active-site Schiff-base intermediate with DXP is the K95. Residues G156, 182 to 183 (AG), and 204 to 205 (NT) each bind 1-deoxy-D-xylulose 5-phosphate.

This sequence belongs to the ThiG family. As to quaternary structure, homotetramer. Forms heterodimers with either ThiH or ThiS.

It localises to the cytoplasm. It catalyses the reaction [ThiS sulfur-carrier protein]-C-terminal-Gly-aminoethanethioate + 2-iminoacetate + 1-deoxy-D-xylulose 5-phosphate = [ThiS sulfur-carrier protein]-C-terminal Gly-Gly + 2-[(2R,5Z)-2-carboxy-4-methylthiazol-5(2H)-ylidene]ethyl phosphate + 2 H2O + H(+). The protein operates within cofactor biosynthesis; thiamine diphosphate biosynthesis. Functionally, catalyzes the rearrangement of 1-deoxy-D-xylulose 5-phosphate (DXP) to produce the thiazole phosphate moiety of thiamine. Sulfur is provided by the thiocarboxylate moiety of the carrier protein ThiS. In vitro, sulfur can be provided by H(2)S. This chain is Thiazole synthase, found in Shewanella baltica (strain OS223).